Consider the following 275-residue polypeptide: MWRAGSMSAELGVGCALRAVNERVQQAVALRPRDLPAIQPRLVAVSKTKPADMVIEAYGHGQRTFGENYVQELLEKASNPKILSLGPEIKWHFIGHLQKQNVNKLMAVPNLFVLETVDSVKLAGKVNSSWQKKGSPERLKVMVQINTSGEESKHGLPPSETIAIVEHINAKCPNLEFVGLMTIGSFGHDLSQGPNPDFQLLLSLREELCKKLNIPADQVELSMGMSVDFQHAIEVGSTNVRIGSMIFGERDYSKKPAPDKCAADVKAPLEVAQEH.

Phosphoserine is present on Ser6. Lys47 is modified (N6-(pyridoxal phosphate)lysine). Tyr69 is modified (phosphotyrosine). Residue Lys125 is modified to N6-succinyllysine. A phosphoserine mark is found at Ser226 and Ser244.

It belongs to the pyridoxal phosphate-binding protein YggS/PROSC family.

Pyridoxal 5'-phosphate (PLP)-binding protein, which may be involved in intracellular homeostatic regulation of pyridoxal 5'-phosphate (PLP), the active form of vitamin B6. This is Pyridoxal phosphate homeostasis protein from Pongo abelii (Sumatran orangutan).